Consider the following 1119-residue polypeptide: SH3 and PX domain-containing protein 2A (1119 aa).

Residues 4 to 128 (RTVLDVKVVD…RFFETKPDDI (125 aa)) enclose the PX domain. SH3 domains follow at residues 149–208 (MVLE…SQSG) and 249–308 (SREE…KLKD). Disordered stretches follow at residues 388–429 (SSAT…PPRR), 494–595 (APSS…SNPA), 641–815 (SSDD…HESV), 914–941 (NLRSMSNPSPPIPSKPPGGFSKPTAMLN), and 957–1004 (RPQS…SSFT). An SH3 3 domain is found at 445-504 (TVEAEYYTIAEFQSSISDGISFRGGQKADVIEKNSGGWWYVQIGDTEGWAPSSYIDKRKK). Composition is skewed to basic and acidic residues over residues 581 to 590 (PKPEPRKFEI) and 688 to 718 (GRAERHSSKLFSDESARNPKREPVMRKDVEI). Residues 779 to 802 (TASVVSSEDSTSSRSTSDLSSVYS) are compositionally biased toward low complexity. The segment covering 806–815 (RGGESDHESV) has biased composition (basic and acidic residues). One can recognise an SH3 4 domain in the interval 812 to 871 (HESVLFRTTDAYERAQESELSFPAGVEVEVLEKQESGWWFVRWGSDEGWVPTFYLEPIKH). In terms of domain architecture, SH3 5 spans 1058 to 1119 (NLREVYVSIA…VPSNYLERKK (62 aa)).

It belongs to the SH3PXD2 family. Post-translationally, tyrosine phosphorylated.

The protein localises to the cytoplasm. Its subcellular location is the cell projection. It is found in the podosome. In terms of biological role, adapter protein involved in invadopodia and podosome formation and extracellular matrix degradation. In Danio rerio (Zebrafish), this protein is SH3 and PX domain-containing protein 2A (sh3pxd2a).